The following is a 249-amino-acid chain: MPQAPETLDGWYSLHLLYAIDWSSLRLVPTEERQTIVDELQTFLNKHEEARTNHVGDHAFYNITGQKADILLWALRPEMKDLNAFENEFNKLKIADFLIPTYSYVSIIELGNYLAGKSDEDPYENPHIKPRLFPELPQSEYICFYPMDKRRNETYNWYMLPLEKRQELMYAHGKIGRQYAGKIKQFITGSVGFDDFEWGVTLFADDPLQFKKIVYEMRFDETTARYGDFGSFYVGHIVTKDNLQDLFAL.

Fe-coproporphyrin III is bound by residues Arg-131, 145 to 149 (YPMDK), His-172, and Gln-185. The active site involves Tyr-145.

The protein belongs to the ChdC family. Type 1 subfamily. Fe-coproporphyrin III serves as cofactor.

The enzyme catalyses Fe-coproporphyrin III + 2 H2O2 + 2 H(+) = heme b + 2 CO2 + 4 H2O. It carries out the reaction Fe-coproporphyrin III + H2O2 + H(+) = harderoheme III + CO2 + 2 H2O. It catalyses the reaction harderoheme III + H2O2 + H(+) = heme b + CO2 + 2 H2O. It functions in the pathway porphyrin-containing compound metabolism; protoheme biosynthesis. Functionally, involved in coproporphyrin-dependent heme b biosynthesis. Catalyzes the decarboxylation of Fe-coproporphyrin III (coproheme) to heme b (protoheme IX), the last step of the pathway. The reaction occurs in a stepwise manner with a three-propionate intermediate. The polypeptide is Coproheme decarboxylase (Staphylococcus saprophyticus subsp. saprophyticus (strain ATCC 15305 / DSM 20229 / NCIMB 8711 / NCTC 7292 / S-41)).